Reading from the N-terminus, the 251-residue chain is MQNSQLFTESLPKHIAIIMDGNGRWAKSKGQPRVFGHKKGVSAVRKTIAAASKLNIQAITLFAFSSENWRRPEEEVGLLMELFITVLSSEVKKLHKNNLRLRIIGDTSRFSERLQKKIVEAQELTASNTGMVINVAANYGGKWDITQAVQKVAQQVALGDLSAEDITEDDIAKHLTMSDLPEVDLLIRTSGECRISNFMLWQMAYAEMYFTPVFWPDFGEESLIEAITWFVNRERRFGCTGEQIKALMSAQ.

The active site involves Asp-20. Asp-20 is a binding site for Mg(2+). Residues 21–24 (GNGR), Trp-25, Arg-33, His-37, and 65–67 (SSE) each bind substrate. Asn-68 functions as the Proton acceptor in the catalytic mechanism. Substrate-binding positions include Trp-69, Arg-71, Arg-188, and 194–196 (RIS). Mg(2+) is bound at residue Glu-207.

This sequence belongs to the UPP synthase family. Homodimer. Requires Mg(2+) as cofactor.

It carries out the reaction 8 isopentenyl diphosphate + (2E,6E)-farnesyl diphosphate = di-trans,octa-cis-undecaprenyl diphosphate + 8 diphosphate. Its function is as follows. Catalyzes the sequential condensation of isopentenyl diphosphate (IPP) with (2E,6E)-farnesyl diphosphate (E,E-FPP) to yield (2Z,6Z,10Z,14Z,18Z,22Z,26Z,30Z,34E,38E)-undecaprenyl diphosphate (di-trans,octa-cis-UPP). UPP is the precursor of glycosyl carrier lipid in the biosynthesis of bacterial cell wall polysaccharide components such as peptidoglycan and lipopolysaccharide. The chain is Ditrans,polycis-undecaprenyl-diphosphate synthase ((2E,6E)-farnesyl-diphosphate specific) from Vibrio vulnificus (strain CMCP6).